The following is a 321-amino-acid chain: CPX chromosomal region candidate gene 1 protein homolog (321 aa).

The disordered stretch occupies residues 1–83; it reads MSSPTKEGSD…TEIQKDQREE (83 aa). 2 stretches are compositionally biased toward polar residues: residues 21–32 and 44–60; these read NEPSNDCTTDIE and VETN…TSQE.

The polypeptide is CPX chromosomal region candidate gene 1 protein homolog (CPXCR1) (Macaca fascicularis (Crab-eating macaque)).